Here is a 430-residue protein sequence, read N- to C-terminus: 3-phosphoshikimate 1-carboxyvinyltransferase (430 aa).

3-phosphoshikimate contacts are provided by lysine 20, serine 21, and arginine 25. Lysine 20 serves as a coordination point for phosphoenolpyruvate. Glycine 90 and arginine 118 together coordinate phosphoenolpyruvate. 3-phosphoshikimate-binding residues include serine 163, serine 164, glutamine 165, serine 191, aspartate 311, and lysine 338. A phosphoenolpyruvate-binding site is contributed by glutamine 165. Residue aspartate 311 is the Proton acceptor of the active site. 2 residues coordinate phosphoenolpyruvate: arginine 342 and arginine 383.

This sequence belongs to the EPSP synthase family. Monomer.

Its subcellular location is the cytoplasm. It carries out the reaction 3-phosphoshikimate + phosphoenolpyruvate = 5-O-(1-carboxyvinyl)-3-phosphoshikimate + phosphate. Its pathway is metabolic intermediate biosynthesis; chorismate biosynthesis. Catalyzes the transfer of the enolpyruvyl moiety of phosphoenolpyruvate (PEP) to the 5-hydroxyl of shikimate-3-phosphate (S3P) to produce enolpyruvyl shikimate-3-phosphate and inorganic phosphate. This is 3-phosphoshikimate 1-carboxyvinyltransferase from Methanosarcina mazei (strain ATCC BAA-159 / DSM 3647 / Goe1 / Go1 / JCM 11833 / OCM 88) (Methanosarcina frisia).